Here is a 630-residue protein sequence, read N- to C-terminus: YTH domain-containing family protein 1 (630 aa).

Disordered stretches follow at residues aspartate 38 to glutamine 113, tyrosine 160 to tyrosine 183, and glutamine 200 to histidine 241. A compositionally biased stretch (polar residues) spans proline 70 to serine 102. A YTH domain is found at glutamate 382–phenylalanine 590.

The protein belongs to the YTHDF family. YTHDF1 subfamily.

The protein resides in the cytoplasm. It localises to the P-body. Functionally, specifically recognizes and binds N6-methyladenosine (m6A)-containing mRNAs, and regulates their stability. M6A is a modification present at internal sites of mRNAs and some non-coding RNAs and plays a role in mRNA stability and processing. Plays a role in pathogenicity towards plant host. The chain is YTH domain-containing family protein 1 from Pyricularia oryzae (strain 70-15 / ATCC MYA-4617 / FGSC 8958) (Rice blast fungus).